A 531-amino-acid polypeptide reads, in one-letter code: MSNPTLAAEVGRRRTFAIISHPDAGKTTLTEKLLLYGGAIDMAGSVRARRNQRHATSDWMAMEQQRGISITSTVLQFVYRDCQINLLDTPGHQDFSEDTYRTLAAADNAAMLIDAAKGIEAQTRKLFDVCRMRGIPIFTFINKLDRPGREPLELLDEIEKVLGIDVYPVNWPIGMGDTFRGVFDRLEHTVHLFDRTTGGKKMAPVTVGAIGDERMRVLMDEGTYAQIVEEIELLDGVGVPFDIERVAQGKLTPVFFGSAANNFGVQLFLDAFIRFASRPGTRSANTGVISPVAEDFSGFVFKIQANMDPQHRDRVAFIRVCSGKFEKDMTVHHTRSGKKVRLSRSLKLFGQERETVEEAYAGDIVGVINPGTFAIGDTICLGKPLAFEGIPLFPPEHFATLRNPNPSKYKQFLKGVTQLREEGAVQVLFHQDEAKRDPILAAVGQLQFDVVRFRLESEYHVETILEPLPWTLARWITAKQLEDLETIDWYFDSLGLKDHEGRLVILFKTPWGFQQMSERNPHLQFHEIAPL.

A tr-type G domain is found at 11–280; the sequence is GRRRTFAIIS…AFIRFASRPG (270 aa). GTP contacts are provided by residues 20–27, 88–92, and 142–145; these read SHPDAGKT, DTPGH, and NKLD.

The protein belongs to the TRAFAC class translation factor GTPase superfamily. Classic translation factor GTPase family. PrfC subfamily.

It is found in the cytoplasm. In terms of biological role, increases the formation of ribosomal termination complexes and stimulates activities of RF-1 and RF-2. It binds guanine nucleotides and has strong preference for UGA stop codons. It may interact directly with the ribosome. The stimulation of RF-1 and RF-2 is significantly reduced by GTP and GDP, but not by GMP. The protein is Peptide chain release factor 3 of Gloeobacter violaceus (strain ATCC 29082 / PCC 7421).